Here is a 142-residue protein sequence, read N- to C-terminus: Large ribosomal subunit protein uL13 (142 aa).

It belongs to the universal ribosomal protein uL13 family. As to quaternary structure, part of the 50S ribosomal subunit.

In terms of biological role, this protein is one of the early assembly proteins of the 50S ribosomal subunit, although it is not seen to bind rRNA by itself. It is important during the early stages of 50S assembly. The protein is Large ribosomal subunit protein uL13 of Francisella tularensis subsp. holarctica (strain FTNF002-00 / FTA).